A 180-amino-acid polypeptide reads, in one-letter code: Thebaine synthase 1 (180 aa).

Serine 96 lines the thebaine pocket. Residue histidine 111 is the Proton acceptor of the active site. Threonine 127 is a binding site for thebaine.

It belongs to the MLP family. As to quaternary structure, homodimer (allosteric) and oligomers. In terms of tissue distribution, expressed in poppy latex.

It catalyses the reaction (7S)-O-acetylsalutaridinol = thebaine + acetate + H(+). It participates in alkaloid biosynthesis; morphine biosynthesis. Catalyzes the formation of thebaine from (7S)-salutaridinol 7-O-acetate at the expense of labile hydroxylated by-products, which are preferentially produced by spontaneous allylic elimination. This chain is Thebaine synthase 1, found in Papaver somniferum (Opium poppy).